A 180-amino-acid chain; its full sequence is MKQLLDFLPLVVFFVFYKMYDIFVASGALIVATLLALAFTWFKYRKVEKMTLVTAIMVLVFGTLTLAFHSDLFIKWKVTVLYVLFAVALLVSQWFMKKPLIQRMLGKELTLPDTVWSTLNMSWAVFFLVCGLLNIYVAFWLPQDIWVNFKVFGLTALTLVFTLISGVYIYRHMPEEQKKS.

5 helical membrane-spanning segments follow: residues 22-42 (IFVA…FTWF), 50-70 (MTLV…AFHS), 72-92 (LFIK…LLVS), 121-141 (MSWA…AFWL), and 149-169 (FKVF…GVYI).

The protein belongs to the YciB family.

The protein localises to the cell inner membrane. Its function is as follows. Plays a role in cell envelope biogenesis, maintenance of cell envelope integrity and membrane homeostasis. This is Inner membrane-spanning protein YciB from Yersinia enterocolitica serotype O:8 / biotype 1B (strain NCTC 13174 / 8081).